A 364-amino-acid polypeptide reads, in one-letter code: Probable protein phosphatase methylesterase 1 (364 aa).

Residues 1 to 53 are disordered; the sequence is MSDDKLDTLPDLQSETSHVTTPHRQNDLLRQAVTHGRPPPVPSTSTSGKKREM. Residues 11–23 show a composition bias toward polar residues; the sequence is DLQSETSHVTTPH. Catalysis depends on residues serine 164, aspartate 190, and histidine 316.

Belongs to the AB hydrolase superfamily.

It catalyses the reaction [phosphatase 2A protein]-C-terminal L-leucine methyl ester + H2O = [phosphatase 2A protein]-C-terminal L-leucine + methanol + H(+). Demethylates proteins that have been reversibly carboxymethylated. The sequence is that of Probable protein phosphatase methylesterase 1 from Caenorhabditis elegans.